Reading from the N-terminus, the 445-residue chain is MISNIRDLKQHVGETVTLQAWLTDKSGKGKIQFLKLRDGSGFVQATVFKNDVEEEVFESAKRLTQEQALTLTGEVRADERAPGGVELSVRRLSPISENHAEYPITPKEHGIEFLMDQRHLWLRHRRPWAIMRIRDCVQRAIVDFFHSEGFVRFDAPFFTPNAAEGTTELFEIDLFGEDKAYLSQTGQLHAEAGAFAFGKVYTFGPTFRAEKSKTRRHLLEFWMVEPEVAPSNHKQNMDLQERFVSFLVRRALDECTVELEMLGRDLSKLKGAAEGNYPRVTYTEALEIVRQHIENKDLPPNVQEDVQPVEWGDDLGAPHETILGHHFDRPVMIEKYPAAIKAFYMQPDPEDSRVALCDDMIAPEGYGEIIGGSERIHDYDLLKSRIEHEGLPLEAFDWYLDLRRVGSVPHAGFGMGLERVIAWISGIDHIREAIPFPRMLTRMRP.

It belongs to the class-II aminoacyl-tRNA synthetase family. As to quaternary structure, homodimer.

The protein localises to the cytoplasm. The enzyme catalyses tRNA(Asn) + L-asparagine + ATP = L-asparaginyl-tRNA(Asn) + AMP + diphosphate + H(+). The chain is Asparagine--tRNA ligase from Deinococcus deserti (strain DSM 17065 / CIP 109153 / LMG 22923 / VCD115).